Here is a 138-residue protein sequence, read N- to C-terminus: ATP synthase epsilon chain (138 aa).

It belongs to the ATPase epsilon chain family. F-type ATPases have 2 components, CF(1) - the catalytic core - and CF(0) - the membrane proton channel. CF(1) has five subunits: alpha(3), beta(3), gamma(1), delta(1), epsilon(1). CF(0) has three main subunits: a, b and c.

The protein resides in the cell inner membrane. Its function is as follows. Produces ATP from ADP in the presence of a proton gradient across the membrane. This chain is ATP synthase epsilon chain, found in Geobacter sulfurreducens (strain ATCC 51573 / DSM 12127 / PCA).